The primary structure comprises 1027 residues: MLPNLNRIPQVEQYVLDYLDDLQCQHFEGDIATNYADRLSLATDNSVYQQLPQAILFPKTVADIVRITKLANLPEYQSISFTPRGGGTGTNGQSINNNIIVDLSRHMTAILELNVKERWVRVQAGVVKDQLNQFLKPHGLFFAPELSTSNRATLGGMINTDASGQGSLQYGKTSNHVLALRAVLINGEILDTSAVNSVDVLENIDALELSESSKKLHQTIAQHCKEKRAAIIKDLPQLNRFLTGYDLKNVFNEDESEFNLTRILTGSEGSLAFICEAKLNLLLIPQYRTLINIKYRSFDAALRNAPFMVKANALSVETVDSKVLNLAKQDIIWHSVNELLTEDEKDPILGLNIVEFAGNNKEKIDRQVTALCRLLDEKIEHNQDHIIGYQVCSDLPSIERIYAMRKKAVGLLGNAKGAAKPIPFVEDTCVPPENLADYISEFRALLDQHNLQYGMFGHVDAGVLHVRPALDLCDKEQVKLFKQISDEVAELTIKYGGLLWGEHGKGVRSHYGEKFFTPELWHELRYIKTLFDPNNRLNPGKICTPLDSKDELYSILSPMRADKDRQIPIQIRDEFKGAMNCNGNGLCFNFDEHSIMCPSMKVSKNRVFSPKGRAAMVREWLRLMANENVSPEQLDFRKTEIKLTALVKRLSNTVQKWRGNYDFSHEVKAAMDTCLACKACASQCPIKIDVPSFRAKFFHFYHSRYLRPTKDHIVANLEIAAPYMAKQAKFFNYFTKLKVTQTLVEKTLGMTDLPLLSEPSLQQQLVEIHYQGKSLEELESLSAVEKNDILFIVQDPYTSYYDAKVIRDFVMLTQKLGFKPILLPFKPNGKAMHIKGFLKRFSKTAQNQAEFLNRMAKLGIPLVGVDPAIVLSYRDEYKEALQEKRGDFHVLTAHEWLKQRLQNADLQEKLKNIAKTDRTLGWYLFPHCTESTFMPNSPKEWQEIFGRFGQQLNVEKVGCCGMAGVFGHEVQNQKMSREIYDVSWHKKLHGKDPHFCLATGYSCRSQVKRYEHVVLKHPVQALLEVLK.

Residues 48-284 (YQQLPQAILF…CEAKLNLLLI (237 aa)) enclose the FAD-binding PCMH-type domain. (R)-2-hydroxyglutarate contacts are provided by R405 and H503. Residues 665-696 (HEVKAAMDTCLACKACASQCPIKIDVPSFRAK) form the 4Fe-4S ferredoxin-type domain. [4Fe-4S] cluster-binding residues include C674, C677, C680, and C684.

This sequence in the N-terminal section; belongs to the FAD-binding oxidoreductase/transferase type 4 family. Homotetramer. [4Fe-4S] cluster serves as cofactor. Requires FAD as cofactor.

The catalysed reaction is (R)-2-hydroxyglutarate + A = 2-oxoglutarate + AH2. Its function is as follows. Catalyzes the oxidation of D-2-hydroxyglutarate (D-2-HGA) to 2-oxoglutarate. Provides the way to recycle D-2-HGA produced during L-serine synthesis by SerA, by converting it back to 2-oxoglutarate. The physiological molecule that functions as the primary electron acceptor during D-2-HGA oxidation is unknown. The protein is D-2-hydroxyglutarate dehydrogenase of Haemophilus influenzae (strain ATCC 51907 / DSM 11121 / KW20 / Rd).